A 232-amino-acid chain; its full sequence is Endonuclease NucS (232 aa).

This sequence belongs to the NucS endonuclease family.

The protein localises to the cytoplasm. Functionally, cleaves both 3' and 5' ssDNA extremities of branched DNA structures. In Mycobacteroides abscessus (strain ATCC 19977 / DSM 44196 / CCUG 20993 / CIP 104536 / JCM 13569 / NCTC 13031 / TMC 1543 / L948) (Mycobacterium abscessus), this protein is Endonuclease NucS.